The chain runs to 186 residues: MKEHEITRQAREHFQKTINTMSDQLSTVRASRVSPAILEPVTVEYEGAKYKLSELAMVVAQDARTLIIEPWDVSMIPAISRSLQKANVGANPSDDGKRIKLVFPSLSQERREELARLVDKYLEEARIALRNIRREYIDEVKSKEKKKELSEDESRRIQNELQKAFEEYEKQMEQICQRKRKEIMEE.

It belongs to the RRF family.

Its subcellular location is the cytoplasm. Functionally, responsible for the release of ribosomes from messenger RNA at the termination of protein biosynthesis. May increase the efficiency of translation by recycling ribosomes from one round of translation to another. The polypeptide is Ribosome-recycling factor (Coprothermobacter proteolyticus (strain ATCC 35245 / DSM 5265 / OCM 4 / BT)).